Reading from the N-terminus, the 449-residue chain is Putative F-box/FBD/LRR-repeat protein At3g49480 (449 aa).

An F-box domain is found at 11–59; that stretch reads EDRISSLPDDLLVKILLCVPTKDAAATTFLSKRWRFVWRMLPRLNYIET. LRR repeat units follow at residues 60-91, 153-180, 182-206, 235-260, 275-302, and 327-352; these read TSDV…WIDL, RLTL…DLFC, VYKD…KVTR, FRED…HIFD, VTVV…ALSP, and SEYD…LVDS. In terms of domain architecture, FBD spans 364–412; sequence WNQPSSIPRCLSSHLEIFEWDGYVGREDEKKIIRYILENSKYLKTAGIS.

This Arabidopsis thaliana (Mouse-ear cress) protein is Putative F-box/FBD/LRR-repeat protein At3g49480.